A 295-amino-acid polypeptide reads, in one-letter code: GTPase Era (295 aa).

The Era-type G domain occupies 7–176 (KTVSVCIIGR…ITSKAKIAPW (170 aa)). A G1 region spans residues 15-22 (GRPNSGKS). Residue 15–22 (GRPNSGKS) participates in GTP binding. The interval 41 to 45 (QTTRS) is G2. The segment at 62–65 (DTPG) is G3. GTP contacts are provided by residues 62-66 (DTPGI) and 124-127 (NKID). A G4 region spans residues 124-127 (NKID). A G5 region spans residues 152 to 154 (ISA). One can recognise a KH type-2 domain in the interval 204–281 (LQQELPYKLT…HLFLFVKVQE (78 aa)).

The protein belongs to the TRAFAC class TrmE-Era-EngA-EngB-Septin-like GTPase superfamily. Era GTPase family. As to quaternary structure, monomer.

It is found in the cytoplasm. The protein localises to the cell inner membrane. Functionally, an essential GTPase that binds both GDP and GTP, with rapid nucleotide exchange. Plays a role in 16S rRNA processing and 30S ribosomal subunit biogenesis and possibly also in cell cycle regulation and energy metabolism. In Rickettsia bellii (strain RML369-C), this protein is GTPase Era.